The primary structure comprises 240 residues: tRNA (guanine-N(7)-)-methyltransferase (240 aa).

Residues 1-20 (MTESHDTPITPDGEARPHRR) form a disordered region. 4 residues coordinate S-adenosyl-L-methionine: glutamate 70, glutamate 95, aspartate 122, and aspartate 145. The active site involves aspartate 145. Substrate is bound by residues lysine 149, aspartate 181, and 218–221 (TKFE).

It belongs to the class I-like SAM-binding methyltransferase superfamily. TrmB family.

The enzyme catalyses guanosine(46) in tRNA + S-adenosyl-L-methionine = N(7)-methylguanosine(46) in tRNA + S-adenosyl-L-homocysteine. It participates in tRNA modification; N(7)-methylguanine-tRNA biosynthesis. Its function is as follows. Catalyzes the formation of N(7)-methylguanine at position 46 (m7G46) in tRNA. In Pseudomonas putida (strain ATCC 47054 / DSM 6125 / CFBP 8728 / NCIMB 11950 / KT2440), this protein is tRNA (guanine-N(7)-)-methyltransferase.